The following is a 77-amino-acid chain: uncharacterized protein (77 aa).

The chain crosses the membrane as a helical span at residues N57–T76.

Its subcellular location is the membrane. This is an uncharacterized protein from Schizosaccharomyces pombe (strain 972 / ATCC 24843) (Fission yeast).